The primary structure comprises 240 residues: UDP-2,3-diacylglucosamine hydrolase (240 aa).

The Mn(2+) site is built by Asp8, His10, Asp41, Asn79, and His114. Position 79–80 (79–80) interacts with substrate; the sequence is NR. Substrate contacts are provided by Asp122, Ser160, Asn164, Lys167, and His195. Mn(2+) is bound by residues His195 and His197.

This sequence belongs to the LpxH family. Mn(2+) is required as a cofactor.

Its subcellular location is the cell inner membrane. It catalyses the reaction UDP-2-N,3-O-bis[(3R)-3-hydroxytetradecanoyl]-alpha-D-glucosamine + H2O = 2-N,3-O-bis[(3R)-3-hydroxytetradecanoyl]-alpha-D-glucosaminyl 1-phosphate + UMP + 2 H(+). The protein operates within glycolipid biosynthesis; lipid IV(A) biosynthesis; lipid IV(A) from (3R)-3-hydroxytetradecanoyl-[acyl-carrier-protein] and UDP-N-acetyl-alpha-D-glucosamine: step 4/6. In terms of biological role, hydrolyzes the pyrophosphate bond of UDP-2,3-diacylglucosamine to yield 2,3-diacylglucosamine 1-phosphate (lipid X) and UMP by catalyzing the attack of water at the alpha-P atom. Involved in the biosynthesis of lipid A, a phosphorylated glycolipid that anchors the lipopolysaccharide to the outer membrane of the cell. This Proteus mirabilis (strain HI4320) protein is UDP-2,3-diacylglucosamine hydrolase.